The following is a 171-amino-acid chain: Protein GrpE (171 aa).

A disordered region spans residues 1–20; the sequence is MNEEKEESPSTEAEGAGAEV.

This sequence belongs to the GrpE family. As to quaternary structure, homodimer.

The protein localises to the cytoplasm. In terms of biological role, participates actively in the response to hyperosmotic and heat shock by preventing the aggregation of stress-denatured proteins, in association with DnaK and GrpE. It is the nucleotide exchange factor for DnaK and may function as a thermosensor. Unfolded proteins bind initially to DnaJ; upon interaction with the DnaJ-bound protein, DnaK hydrolyzes its bound ATP, resulting in the formation of a stable complex. GrpE releases ADP from DnaK; ATP binding to DnaK triggers the release of the substrate protein, thus completing the reaction cycle. Several rounds of ATP-dependent interactions between DnaJ, DnaK and GrpE are required for fully efficient folding. The chain is Protein GrpE from Acidithiobacillus ferrooxidans (strain ATCC 23270 / DSM 14882 / CIP 104768 / NCIMB 8455) (Ferrobacillus ferrooxidans (strain ATCC 23270)).